The sequence spans 259 residues: (3R)-3-hydroxyacyl-CoA dehydrogenase (259 aa).

Residues 13-21 (LVTGAGSGI) and 40-41 (DL) contribute to the NAD(+) site. Phosphoserine is present on S58. 72 to 74 (ADV) provides a ligand contact to NAD(+). Residue S154 participates in substrate binding. The residue at position 158 (K158) is an N6-succinyllysine. The active-site Proton acceptor is Y167. Residues 167–171 (YAASK) and 200–202 (ITT) contribute to the NAD(+) site. The residue at position 171 (K171) is an N6-succinyllysine.

It belongs to the short-chain dehydrogenases/reductases (SDR) family. As to quaternary structure, heterotetramer with CBR4; contains two molecules of HSD17B8 and CBR4.

It is found in the mitochondrion matrix. It catalyses the reaction a (3R)-3-hydroxyacyl-CoA + NAD(+) = a 3-oxoacyl-CoA + NADH + H(+). The enzyme catalyses 17beta-estradiol + NAD(+) = estrone + NADH + H(+). It carries out the reaction testosterone + NAD(+) = androst-4-ene-3,17-dione + NADH + H(+). The catalysed reaction is 17beta-hydroxy-5alpha-androstan-3-one + NAD(+) = 5alpha-androstan-3,17-dione + NADH + H(+). It participates in steroid biosynthesis; estrogen biosynthesis. It functions in the pathway lipid metabolism; fatty acid biosynthesis. The protein operates within lipid metabolism; mitochondrial fatty acid beta-oxidation. Required for the solubility and assembly of the heterotetramer 3-ketoacyl-[acyl carrier protein] (ACP) reductase functional complex (KAR or KAR1) that forms part of the mitochondrial fatty acid synthase (mtFAS). Alpha-subunit of the KAR complex that acts as scaffold protein required for the stability of carbonyl reductase type-4 (CBR4, beta-subunit of the KAR complex) and for its 3-ketoacyl-ACP reductase activity, thereby participating in mitochondrial fatty acid biosynthesis. Catalyzes the NAD-dependent conversion of (3R)-3-hydroxyacyl-CoA into 3-ketoacyl-CoA (3-oxoacyl-CoA) with no chain length preference; this enzymatic activity is not needed for the KAR function. Prefers (3R)-3-hydroxyacyl-CoA over (3S)-3-hydroxyacyl-CoA and displays enzymatic activity only in the presence of NAD(+). Cooperates with enoyl-CoA hydratase 1 in mitochondria, together they constitute an alternative route to the auxiliary enzyme pathways for the breakdown of Z-PUFA (cis polyunsaturated fatty acid) enoyl-esters. NAD-dependent 17-beta-hydroxysteroid dehydrogenase with highest activity towards estradiol (17beta-estradiol or E2). Has very low activity towards testosterone and dihydrotestosterone (17beta-hydroxy-5alpha-androstan-3-one). Primarily an oxidative enzyme, it can switch to a reductive mode determined in the appropriate physiologic milieu and catalyze the reduction of estrone (E1) to form biologically active 17beta-estradiol. The sequence is that of (3R)-3-hydroxyacyl-CoA dehydrogenase (HSD17B8) from Canis lupus familiaris (Dog).